The primary structure comprises 193 residues: uncharacterized protein (193 aa).

Residues 55–94 (PVGGAAGARSLSQALPAPAPPPPPPPGLGPSSERPWPSPW) are disordered. The span at 71–82 (APAPPPPPPPGL) shows a compositional bias: pro residues.

This is an uncharacterized protein from Homo sapiens (Human).